The following is an 83-amino-acid chain: MSFLDYFLGSRKKSANVAKDRLKLILAHERDADGPDFLPALQEELLAVIAKYIPVDKENIKVSMERRGDFEVLELNVLFPDQH.

Belongs to the MinE family.

Prevents the cell division inhibition by proteins MinC and MinD at internal division sites while permitting inhibition at polar sites. This ensures cell division at the proper site by restricting the formation of a division septum at the midpoint of the long axis of the cell. This chain is Cell division topological specificity factor, found in Acidithiobacillus ferrooxidans (strain ATCC 23270 / DSM 14882 / CIP 104768 / NCIMB 8455) (Ferrobacillus ferrooxidans (strain ATCC 23270)).